Here is a 206-residue protein sequence, read N- to C-terminus: Ribosomal RNA small subunit methyltransferase G (206 aa).

Residues glycine 71, phenylalanine 76, 125 to 126, and arginine 139 each bind S-adenosyl-L-methionine; that span reads IE.

Belongs to the methyltransferase superfamily. RNA methyltransferase RsmG family.

Its subcellular location is the cytoplasm. It carries out the reaction guanosine(527) in 16S rRNA + S-adenosyl-L-methionine = N(7)-methylguanosine(527) in 16S rRNA + S-adenosyl-L-homocysteine. Specifically methylates the N7 position of guanine in position 527 of 16S rRNA. The chain is Ribosomal RNA small subunit methyltransferase G from Cereibacter sphaeroides (strain ATCC 17029 / ATH 2.4.9) (Rhodobacter sphaeroides).